Here is a 351-residue protein sequence, read N- to C-terminus: Type II restriction enzyme NmeDI (351 aa).

It catalyses the reaction Endonucleolytic cleavage of DNA to give specific double-stranded fragments with terminal 5'-phosphates.. A P subtype restriction enzyme that recognizes the double-stranded sequence 5'-N(12)RCCGGYN(12)-3' and cleaves on both sides of the recognition sequence. The sequence is that of Type II restriction enzyme NmeDI (nmeDIRP) from Neisseria meningitidis serogroup C.